A 387-amino-acid polypeptide reads, in one-letter code: Diphthine methyltransferase (387 aa).

5 WD repeats span residues Asn-62–Phe-102, Glu-119–Thr-159, Pro-195–Ser-237, Ile-241–Phe-286, and Gly-357–Val-387.

This sequence belongs to the DPH7 family. Interacts with CAN1 and RTT10.

It localises to the cytoplasm. It is found in the endosome. It catalyses the reaction diphthine methyl ester-[translation elongation factor 2] + H2O = diphthine-[translation elongation factor 2] + methanol + H(+). The protein operates within protein modification; peptidyl-diphthamide biosynthesis. Functionally, catalyzes the demethylation of diphthine methyl ester to form diphthine, an intermediate in diphthamide biosynthesis, a post-translational modification of histidine which occurs in translation elongation factor 2 (EFT1 and EFT2). Also plays a role in the regulation of the retromer complex and is required for the recycling from endosomes of plasma membrane proteins like CAN1 and MUP1. Identified in a screen for mutants with decreased levels of rDNA transcription. The chain is Diphthine methyltransferase (RRT2) from Saccharomyces cerevisiae (strain ATCC 204508 / S288c) (Baker's yeast).